The sequence spans 488 residues: Katanin p60 ATPase-containing subunit A-like 1 (488 aa).

The tract at residues 84–184 (FPNPVPEEGP…EQKKFDGTGY (101 aa)) is disordered. Positions 144 to 167 (KPDRPNTRDGRGNKAKEEKSKRNA) are enriched in basic and acidic residues. Residue 246–253 (GPPGTGKT) coordinates ATP.

This sequence belongs to the AAA ATPase family. Katanin p60 subunit A1 subfamily. A-like 1 sub-subfamily.

It is found in the cytoplasm. It localises to the cytoskeleton. Its subcellular location is the spindle pole. The protein resides in the spindle. The enzyme catalyses n ATP + n H2O + a microtubule = n ADP + n phosphate + (n+1) alpha/beta tubulin heterodimers.. In terms of biological role, regulates microtubule dynamics in Sertoli cells, a process that is essential for spermiogenesis and male fertility. Severs microtubules in an ATP-dependent manner, promoting rapid reorganization of cellular microtubule arrays. The protein is Katanin p60 ATPase-containing subunit A-like 1 (katnal1) of Danio rerio (Zebrafish).